A 347-amino-acid polypeptide reads, in one-letter code: NADH-ubiquinone oxidoreductase chain 2 (347 aa).

A run of 9 helical transmembrane segments spans residues 1–21 (MNPFVSVIIYTTIILGTMIVM), 59–79 (YFMTQATASMLLMLAVIINLL), 93–115 (TASMIMTMALAMKLGLSPFHFWV), 149–169 (INPNLILTMSMLSILVGGWGG), 178–198 (IMAYSSIAHMGWMAAILIYNP), 201–221 (TILNLTIYLMTTFTMFTMFAL), 239–259 (IITTLMLTILLSMGGLPPLTG), 274–294 (DSIILPTLMAIMALLNLYFYM), and 325–345 (LLPTMIILSTMLLPLTPMLVV).

This sequence belongs to the complex I subunit 2 family. In terms of assembly, core subunit of respiratory chain NADH dehydrogenase (Complex I) which is composed of 45 different subunits. Interacts with TMEM242.

Its subcellular location is the mitochondrion inner membrane. It catalyses the reaction a ubiquinone + NADH + 5 H(+)(in) = a ubiquinol + NAD(+) + 4 H(+)(out). In terms of biological role, core subunit of the mitochondrial membrane respiratory chain NADH dehydrogenase (Complex I) which catalyzes electron transfer from NADH through the respiratory chain, using ubiquinone as an electron acceptor. Essential for the catalytic activity and assembly of complex I. This Hippopotamus amphibius (Hippopotamus) protein is NADH-ubiquinone oxidoreductase chain 2.